Reading from the N-terminus, the 689-residue chain is Beta-adrenergic receptor kinase 1 (689 aa).

Positions 1-190 (MADLEAVLAD…ELNIHLTMND (190 aa)) are N-terminal. Positions 54 to 175 (TFEKIFSQKL…IESDKFTRFC (122 aa)) constitute an RGS domain. Positions 191–453 (FSVHRIIGRG…AQEVKESPFF (263 aa)) constitute a Protein kinase domain. Residues 197–205 (IGRGGFGEV) and K220 each bind ATP. Residue D317 is the Proton acceptor of the active site. The AGC-kinase C-terminal domain occupies 454-521 (RSLDWQMVFL…TISERWQQEV (68 aa)). In terms of domain architecture, PH spans 558 to 652 (DCIMHGYMSK…WKKELRDAYR (95 aa)). S670 bears the Phosphoserine mark.

It belongs to the protein kinase superfamily. AGC Ser/Thr protein kinase family. GPRK subfamily. As to quaternary structure, interacts with the heterodimer formed by GNB1 and GNG2. Interacts with GIT1. Interacts with, and phosphorylates chemokine-stimulated CCR5. Interacts with ARRB1. Interacts with LPAR1 and LPAR2. Interacts with RALA in response to LPAR1 activation. ADRBK1 and RALA mutually inhibit each other's binding to LPAR1. Interacts with ADRB2.

Its subcellular location is the cytoplasm. The protein localises to the cell membrane. It localises to the postsynapse. The protein resides in the presynapse. The enzyme catalyses [beta-adrenergic receptor] + ATP = [beta-adrenergic receptor]-phosphate + ADP + H(+). In contrast to other AGC family kinases, the catalytic activity is solely regulated by the binding of substrates and ligands, not by phosphorylation of the kinase domain. Its function is as follows. Specifically phosphorylates the agonist-occupied form of the beta-adrenergic and closely related receptors, probably inducing a desensitization of them. Key regulator of LPAR1 signaling. Competes with RALA for binding to LPAR1 thus affecting the signaling properties of the receptor. Desensitizes LPAR1 and LPAR2 in a phosphorylation-independent manner. Positively regulates ciliary smoothened (SMO)-dependent Hedgehog (Hh) signaling pathway by facilitating the trafficking of SMO into the cilium and the stimulation of SMO activity. Inhibits relaxation of airway smooth muscle in response to blue light. In Mesocricetus auratus (Golden hamster), this protein is Beta-adrenergic receptor kinase 1.